A 281-amino-acid polypeptide reads, in one-letter code: Apolipoprotein E (281 aa).

The first 18 residues, 1-18 (MKVLWAALLIALLAGCQG), serve as a signal peptide directing secretion. 5 repeat units span residues 82-103 (ALMD…EQLS), 104-125 (PVAE…ARLG), 126-147 (ADME…AMLG), 148-169 (QSTD…TVSY), and 198-219 (TRME…EQVE). A 5 X 22 AA approximate tandem repeats region spans residues 82–219 (ALMDETMKEL…RLDEVKEQVE (138 aa)). A Methionine sulfoxide modification is found at Met145. Ser149 bears the Phosphoserine mark. The segment at 160-170 (HLRKLRTVSYT) is LDL and other lipoprotein receptors binding. Residues 164 to 167 (LRTV) and 193 to 200 (GERLRTRM) contribute to the heparin site. Positions 230–281 (QQMRLQAEAFQARLKSWFEPLVEDMQRQWAGLVEKVQAAVGASAAPVPSDNH) are homooligomerization. Residues 242–254 (RLKSWFEPLVEDM) form a specificity for association with VLDL region.

It belongs to the apolipoprotein A1/A4/E family. Homotetramer. May interact with ABCA1; functionally associated with ABCA1 in the biogenesis of HDLs. May interact with APP/A4 amyloid-beta peptide; the interaction is extremely stable in vitro but its physiological significance is unclear. May interact with MAPT. May interact with MAP2. In the cerebrospinal fluid, interacts with secreted SORL1. Interacts with PMEL; this allows the loading of PMEL luminal fragment on ILVs to induce fibril nucleation. APOE exists as multiple glycosylated and sialylated glycoforms within cells and in plasma. The extent of glycosylation and sialylation are tissue and context specific. Post-translationally, glycated in plasma VLDL. In terms of processing, phosphorylated by FAM20C in the extracellular medium.

The protein localises to the secreted. Its subcellular location is the extracellular space. It localises to the extracellular matrix. It is found in the extracellular vesicle. The protein resides in the endosome. The protein localises to the multivesicular body. APOE is an apolipoprotein, a protein associating with lipid particles, that mainly functions in lipoprotein-mediated lipid transport between organs via the plasma and interstitial fluids. APOE is a core component of plasma lipoproteins and is involved in their production, conversion and clearance. Apolipoproteins are amphipathic molecules that interact both with lipids of the lipoprotein particle core and the aqueous environment of the plasma. As such, APOE associates with chylomicrons, chylomicron remnants, very low density lipoproteins (VLDL) and intermediate density lipoproteins (IDL) but shows a preferential binding to high-density lipoproteins (HDL). It also binds a wide range of cellular receptors including the LDL receptor/LDLR, the LDL receptor-related proteins LRP1, LRP2 and LRP8 and the very low-density lipoprotein receptor/VLDLR that mediate the cellular uptake of the APOE-containing lipoprotein particles. Finally, APOE also has a heparin-binding activity and binds heparan-sulfate proteoglycans on the surface of cells, a property that supports the capture and the receptor-mediated uptake of APOE-containing lipoproteins by cells. A main function of APOE is to mediate lipoprotein clearance through the uptake of chylomicrons, VLDLs, and HDLs by hepatocytes. APOE is also involved in the biosynthesis by the liver of VLDLs as well as their uptake by peripheral tissues ensuring the delivery of triglycerides and energy storage in muscle, heart and adipose tissues. By participating in the lipoprotein-mediated distribution of lipids among tissues, APOE plays a critical role in plasma and tissues lipid homeostasis. APOE is also involved in two steps of reverse cholesterol transport, the HDLs-mediated transport of cholesterol from peripheral tissues to the liver, and thereby plays an important role in cholesterol homeostasis. First, it is functionally associated with ABCA1 in the biogenesis of HDLs in tissues. Second, it is enriched in circulating HDLs and mediates their uptake by hepatocytes. APOE also plays an important role in lipid transport in the central nervous system, regulating neuron survival and sprouting. This chain is Apolipoprotein E (APOE), found in Aotus nancymaae (Ma's night monkey).